Here is an 883-residue protein sequence, read N- to C-terminus: Valine--tRNA ligase (883 aa).

The short motif at Pro-46–His-56 is the 'HIGH' region element. The 'KMSKS' region signature appears at Lys-520–Ser-524. An ATP-binding site is contributed by Lys-523. Residues Leu-809 to Lys-883 adopt a coiled-coil conformation.

The protein belongs to the class-I aminoacyl-tRNA synthetase family. ValS type 1 subfamily. In terms of assembly, monomer.

It localises to the cytoplasm. It carries out the reaction tRNA(Val) + L-valine + ATP = L-valyl-tRNA(Val) + AMP + diphosphate. In terms of biological role, catalyzes the attachment of valine to tRNA(Val). As ValRS can inadvertently accommodate and process structurally similar amino acids such as threonine, to avoid such errors, it has a 'posttransfer' editing activity that hydrolyzes mischarged Thr-tRNA(Val) in a tRNA-dependent manner. This is Valine--tRNA ligase from Streptococcus pneumoniae serotype 4 (strain ATCC BAA-334 / TIGR4).